The sequence spans 451 residues: Chromosomal replication initiator protein DnaA (451 aa).

Positions Met1–Arg72 are domain I, interacts with DnaA modulators. A domain II region spans residues Arg72 to His108. The segment at Met109 to Ser325 is domain III, AAA+ region. Residues Gly153, Gly155, Lys156, and Thr157 each coordinate ATP. The segment at Ser326–Phe451 is domain IV, binds dsDNA.

This sequence belongs to the DnaA family. In terms of assembly, oligomerizes as a right-handed, spiral filament on DNA at oriC.

The protein resides in the cytoplasm. Functionally, plays an essential role in the initiation and regulation of chromosomal replication. ATP-DnaA binds to the origin of replication (oriC) to initiate formation of the DNA replication initiation complex once per cell cycle. Binds the DnaA box (a 9 base pair repeat at the origin) and separates the double-stranded (ds)DNA. Forms a right-handed helical filament on oriC DNA; dsDNA binds to the exterior of the filament while single-stranded (ss)DNA is stabiized in the filament's interior. The ATP-DnaA-oriC complex binds and stabilizes one strand of the AT-rich DNA unwinding element (DUE), permitting loading of DNA polymerase. After initiation quickly degrades to an ADP-DnaA complex that is not apt for DNA replication. Binds acidic phospholipids. This is Chromosomal replication initiator protein DnaA from Listeria monocytogenes serotype 4b (strain F2365).